A 168-amino-acid chain; its full sequence is Protein FAM163A (168 aa).

The helical transmembrane segment at 6–26 (VVITGGILATVILLCIIAVLC) threads the bilayer.

It belongs to the FAM163 family.

The protein localises to the membrane. This is Protein FAM163A (Fam163a) from Mus musculus (Mouse).